Consider the following 225-residue polypeptide: Cytidylate kinase (225 aa).

11 to 19 lines the ATP pocket; it reads GPAGVGKST.

It belongs to the cytidylate kinase family. Type 1 subfamily.

The protein resides in the cytoplasm. The catalysed reaction is CMP + ATP = CDP + ADP. The enzyme catalyses dCMP + ATP = dCDP + ADP. This is Cytidylate kinase from Lawsonia intracellularis (strain PHE/MN1-00).